The following is an 85-amino-acid chain: Neutrophil elastase 2A (85 aa).

The 85-residue stretch at 1–85 folds into the Peptidase S1 domain; that stretch reads IVGGRAAEPH…VAQGVFSFVR (85 aa). Catalysis depends on Ser-67, which acts as the Charge relay system.

The protein belongs to the peptidase S1 family. Elastase subfamily.

Its function is as follows. May be involved in the degradation of connective tissue in chronic lung disease. The polypeptide is Neutrophil elastase 2A (Equus caballus (Horse)).